We begin with the raw amino-acid sequence, 176 residues long: Endoribonuclease YbeY (176 aa).

Residues H128, H132, and H138 each contribute to the Zn(2+) site.

Belongs to the endoribonuclease YbeY family. The cofactor is Zn(2+).

It is found in the cytoplasm. Its function is as follows. Single strand-specific metallo-endoribonuclease involved in late-stage 70S ribosome quality control and in maturation of the 3' terminus of the 16S rRNA. The protein is Endoribonuclease YbeY of Zymomonas mobilis subsp. mobilis (strain ATCC 31821 / ZM4 / CP4).